The primary structure comprises 982 residues: MSPLKIQGPIRIRSMQTGITKWKEGSFEIVEKENKVSLVVHYNTGGIPRIFQLSHNIKNVVLRPSGAKQSRLMLTLQDNSFLSIDKVPSKDAEEMRLFLDAVHQNRLNAVAMKPSQGSGSFGAILGSRTSQKETHRQLSYSDNQVSSKRGSLETKDDIPFRKVLGNPGRASIKTAAGSGITATRTIPSLTSTSTPLRSGLLENRTEKRKRMLSSGSELNEDYPKENDSSSNNKAMTDPSRKYLTSSREKQLSLKQSEENRTSGLLPLQSSSFYGSRAASKDYSPSSTNLDRTNISSQTPSAKRSLGFLPQPAPLSVKKLRCNQDYTGWNKPRLPLSSHQQQLQGFSNLGNTCYMNAILQSLFSLQSFANDLLKQGIPWKKIPLNALISRRFAHLLVKKDICNSETKKDLLKKVKNAISATAERFSGYMQNDAHEFLSQCLDQLKEDMEKLNKTWKTEPVPGEENSPDVTATRVYTCPVITNLEFEVQHSIICKACGEIIPKREQFNDLSIDLPRRKKPLPPRSIQDSLDLFFRAEELEYSCEKCGGKCALVRHKFNRLPRILILHLKRYSFNVALSLNNKIGQQVIIPRYLTLSSHCTENTKPPFNLGWSAQMAISRPLKASQMVNSCITSPSTPSKNFTFKSKSSLALSLDSDSEDELKRSVALSQRLCEISSSEQQQEDLEKDSKSCKLEPDKSELENSGFDAMSEEELLAAVLEISKREASPSPSHEDDDKPTSSPDTGFAEDDIQEMPENPDPMETEKPKTITEPDPASFTEITKDCDENKENKTPEGSQGEVDWLQQYDMEREREEQELQQALAQSLQEQEAWEQKEDDDLKRATELSLQEFNNSFLDSLGSDEDSGNEDVLDMEYTEAEAEELKRNAETGNLPHSYRLISVVSHIGSTSSSGHYISDVYDIKKQAWFTYNDLEVSKIQEASVQSDRDRSGYIFFYMHKEIFDELLETEKNSQALSMEVGKTTRQAS.

A KEN box 1 motif is present at residues 32-34 (KEN). 2 consecutive short sequence motifs (D-box) follow at residues 71–79 (RLMLTLQDN) and 96–105 (RLFLDAVHQN). A Phosphoserine modification is found at Ser-115. The segment at 128-162 (RTSQKETHRQLSYSDNQVSSKRGSLETKDDIPFRK) is disordered. Over residues 137–149 (QLSYSDNQVSSKR) the composition is skewed to polar residues. Residues 150–160 (GSLETKDDIPF) are compositionally biased toward basic and acidic residues. The short motif at 161 to 169 (RKVLGNPGR) is the D-box 3 element. The residue at position 171 (Ser-171) is a Phosphoserine. Over residues 183-201 (TRTIPSLTSTSTPLRSGLL) the composition is skewed to low complexity. Positions 183–307 (TRTIPSLTST…TPSAKRSLGF (125 aa)) are disordered. Ser-213 is subject to Phosphoserine. Residues 224 to 226 (KEN) carry the KEN box 2 motif. Residues 246–260 (SREKQLSLKQSEENR) show a composition bias toward basic and acidic residues. Residues 282-301 (YSPSSTNLDRTNISSQTPSA) are compositionally biased toward polar residues. The USP domain occupies 343 to 954 (QGFSNLGNTC…SGYIFFYMHK (612 aa)). Cys-352 acts as the Nucleophile in catalysis. Ser-631 carries the post-translational modification Phosphoserine; by CDK2. Phosphoserine occurs at positions 653 and 655. 2 disordered regions span residues 672 to 705 (ISSSEQQQEDLEKDSKSCKLEPDKSELENSGFDA) and 720 to 798 (KREA…GEVD). Basic and acidic residues-rich tracts occupy residues 684-698 (KDSKSCKLEPDKSEL) and 720-735 (KREASPSPSHEDDDKP). The region spanning 707–726 (SEEELLAAVLEISKREASPS) is the UIM 1 domain. Ser-773 bears the Phosphoserine mark. The segment covering 777–789 (ITKDCDENKENKT) has biased composition (basic and acidic residues). The KEN box 3 motif lies at 785 to 787 (KEN). UIM domains lie at 809–828 (REEQELQQALAQSLQEQEAW) and 831–850 (KEDDDLKRATELSLQEFNNS). The active-site Proton acceptor is His-909.

It belongs to the peptidase C19 family. In terms of assembly, interacts with FZR1/CDH1. Interacts with CDT1. Polyubiquitinated via 'Lys-11'-linked ubiquitin by the APC(CDH1) complex during late mitosis, leading to its degradation. Able to mediate auto-deubiquitination. Post-translationally, phosphorylated at Ser-631 by CDK2 during G1/S phase but not during mitosis; phosphorylation at Ser-631 is required for deubiquitinase activity. Also polyubiquitinated during early G1 phase, without leading to degradation. Phosphorylated at Ser-115 by ATM following DNA damage, which in turn increases its deubiquitination activity towards BLM.

It is found in the nucleus. The protein resides in the chromosome. It catalyses the reaction Thiol-dependent hydrolysis of ester, thioester, amide, peptide and isopeptide bonds formed by the C-terminal Gly of ubiquitin (a 76-residue protein attached to proteins as an intracellular targeting signal).. Deubiquitinase that plays a role in different processes including cell cycle regulation, DNA replication or DNA damage response. Antagonizes the anaphase-promoting complex (APC/C) during G1/S transition by mediating deubiquitination of cyclin-A (CCNA1 and CCNA2), thereby promoting S phase entry. Specifically mediates deubiquitination of 'Lys-11'-linked polyubiquitin chains, a specific ubiquitin-linkage type mediated by the APC/C complex. Phosphorylation at Ser-628 during G1/S phase maximizes the deubiquitinase activity, leading to prevent degradation of cyclin-A (CCNA1 and CCNA2). Plays an important role in the regulation of DNA replication by stabilizing the licensing factor CDT1. Also plays an essential role beyond S-phase entry to promote the efficiency and fidelity of replication by deubiquitinating checkpoint kinase 1/CHK1, promoting its stability. Sustains the DNA damage response (DDR) by deubiquitinating and stabilizing the ATP-dependent DNA helicase BLM. Mechanistically, DNA double-strand breaks (DSB) promotes ATM-mediated phosphorylation of USP37 and enhances the binding between USP37 and BLM. Promotes cell migration by deubiquitinating and stabilizing the epithelial-mesenchymal transition (EMT)-inducing transcription factor SNAI. Plays a role in the regulation of mitotic spindle assembly and mitotic progression by associating with chromatin-associated WAPL and stabilizing it through deubiquitination. This chain is Ubiquitin carboxyl-terminal hydrolase 37 (USP37), found in Sus scrofa (Pig).